A 204-amino-acid chain; its full sequence is Urease accessory protein UreG (204 aa).

15–22 (GPVGSGKT) is a binding site for GTP.

The protein belongs to the SIMIBI class G3E GTPase family. UreG subfamily. As to quaternary structure, homodimer. UreD, UreF and UreG form a complex that acts as a GTP-hydrolysis-dependent molecular chaperone, activating the urease apoprotein by helping to assemble the nickel containing metallocenter of UreC. The UreE protein probably delivers the nickel.

The protein resides in the cytoplasm. Facilitates the functional incorporation of the urease nickel metallocenter. This process requires GTP hydrolysis, probably effectuated by UreG. In Methylobacterium sp. (strain 4-46), this protein is Urease accessory protein UreG.